Here is a 92-residue protein sequence, read N- to C-terminus: MANIKSQKKRIRQNEKARLRNKAVKSSLKTAIRKFREAAEAGNVEEAIILQRAAARQLDKAVSKGVIHKNQAANRKSAIAKRLHQLQQSQAA.

A compositionally biased stretch (basic residues) spans M1–I11. The tract at residues M1 to K22 is disordered.

The protein belongs to the bacterial ribosomal protein bS20 family.

Functionally, binds directly to 16S ribosomal RNA. The polypeptide is Small ribosomal subunit protein bS20 (Thermobifida fusca (strain YX)).